Reading from the N-terminus, the 87-residue chain is Small ribosomal subunit protein bS20 (87 aa).

The protein belongs to the bacterial ribosomal protein bS20 family.

Functionally, binds directly to 16S ribosomal RNA. This Sphingopyxis alaskensis (strain DSM 13593 / LMG 18877 / RB2256) (Sphingomonas alaskensis) protein is Small ribosomal subunit protein bS20.